The chain runs to 254 residues: Alcohol dehydrogenase (254 aa).

Residue 10–33 participates in NAD(+) binding; sequence FVAGLGGIGLDTSREIVKSGPKNL. Substrate is bound at residue serine 138. The active-site Proton acceptor is tyrosine 151.

The protein belongs to the short-chain dehydrogenases/reductases (SDR) family. As to quaternary structure, homodimer.

The enzyme catalyses a primary alcohol + NAD(+) = an aldehyde + NADH + H(+). The catalysed reaction is a secondary alcohol + NAD(+) = a ketone + NADH + H(+). The sequence is that of Alcohol dehydrogenase (Adh) from Drosophila nigra (Fruit fly).